A 784-amino-acid polypeptide reads, in one-letter code: Repetin (784 aa).

An S-100-like region spans residues 1–91; sequence MAQLLNSILS…VQACYHKLDN (91 aa). EF-hand domains are found at residues 13–48 and 49–84; these read DVFHKYAKGNGDCALLCKEELKQLLLAEFGDILQRP and NDPETVETILNLLDQDRDGHIDFHEYLLLVFQLVQA. The Ca(2+) site is built by glutamate 32, aspartate 62, aspartate 64, aspartate 66, histidine 68, and glutamate 73. 4 disordered regions span residues 92–221, 282–584, 601–661, and 677–784; these read KSHG…QAKW, GCGQ…SHYI, TEGT…HQHK, and RDWQ…NHQR. Residues 124 to 201 are compositionally biased toward basic and acidic residues; it reads RHEEERQNSH…FSFDQSERQS (78 aa). Composition is skewed to polar residues over residues 286-296, 304-343, 356-392, 400-486, 504-584, 610-646, and 680-695; these read TDRQGQSSHYG, SYHYGQTDRQGQSSHYSQTDRQGQSSHYSQPDRQGQSSHY, DQTNRQGQGSHYSQPNRQGQSSHYGQPDTQDQSSHYG, SSHY…QSSH, GQGQ…SHYI, VEQSGRSGRLSQQTPGQEGYQNQGQGFQSRDSQQNGH, and QSCSSEQGHRQAQTRQ. Basic and acidic residues-rich tracts occupy residues 704-722 and 729-784; these read WAEEEQGHQTWDRHSHESQ and QDRR…NHQR.

The protein belongs to the S100-fused protein family. In terms of processing, potential substrate of transglutaminase. Some arginines are probably converted to citrullines by peptidylarginine deimidase. Expression is scattered in the normal epidermis but strong in the acrosyringium, the inner hair root sheath and in the filiform papilli of the tongue.

It localises to the secreted. Its subcellular location is the extracellular space. It is found in the extracellular matrix. In terms of biological role, involved in the cornified cell envelope formation. Multifunctional epidermal matrix protein. Reversibly binds calcium. The chain is Repetin (RPTN) from Homo sapiens (Human).